The following is a 334-amino-acid chain: GTP 3',8-cyclase (334 aa).

Residues 13-239 enclose the Radical SAM core domain; it reads KFHRKFYYLR…KVRSHHDGPA (227 aa). Residue Arg-22 coordinates GTP. [4Fe-4S] cluster contacts are provided by Cys-29 and Cys-33. S-adenosyl-L-methionine is bound at residue Tyr-35. Residue Cys-36 participates in [4Fe-4S] cluster binding. Residue Arg-73 participates in GTP binding. Residue Gly-77 coordinates S-adenosyl-L-methionine. Thr-104 lines the GTP pocket. Ser-128 lines the S-adenosyl-L-methionine pocket. Residue Lys-165 participates in GTP binding. Met-199 is an S-adenosyl-L-methionine binding site. [4Fe-4S] cluster contacts are provided by Cys-262 and Cys-265. GTP is bound at residue 267–269; that stretch reads RLR. [4Fe-4S] cluster is bound at residue Cys-279.

This sequence belongs to the radical SAM superfamily. MoaA family. Monomer and homodimer. [4Fe-4S] cluster serves as cofactor.

The enzyme catalyses GTP + AH2 + S-adenosyl-L-methionine = (8S)-3',8-cyclo-7,8-dihydroguanosine 5'-triphosphate + 5'-deoxyadenosine + L-methionine + A + H(+). It participates in cofactor biosynthesis; molybdopterin biosynthesis. Its function is as follows. Catalyzes the cyclization of GTP to (8S)-3',8-cyclo-7,8-dihydroguanosine 5'-triphosphate. The chain is GTP 3',8-cyclase from Vibrio parahaemolyticus serotype O3:K6 (strain RIMD 2210633).